A 434-amino-acid chain; its full sequence is Alpha-enolase (434 aa).

Ser-40 is a binding site for Mg(2+). 2 residues coordinate substrate: His-158 and Glu-167. The active-site Proton donor is Glu-210. Mg(2+) is bound by residues Asp-245, Glu-293, and Asp-318. Residues Glu-293 and Asp-318 each contribute to the substrate site. Catalysis depends on Lys-343, which acts as the Proton acceptor. Substrate is bound by residues 370 to 373 (SHRS) and Lys-394.

It belongs to the enolase family. Homodimer. It depends on Mg(2+) as a cofactor.

Its subcellular location is the cytoplasm. The catalysed reaction is (2R)-2-phosphoglycerate = phosphoenolpyruvate + H2O. It functions in the pathway carbohydrate degradation; glycolysis; pyruvate from D-glyceraldehyde 3-phosphate: step 4/5. This Gallus gallus (Chicken) protein is Alpha-enolase (ENO1).